The sequence spans 65 residues: Large ribosomal subunit protein bL35 (65 aa).

The protein belongs to the bacterial ribosomal protein bL35 family.

The protein is Large ribosomal subunit protein bL35 of Erwinia tasmaniensis (strain DSM 17950 / CFBP 7177 / CIP 109463 / NCPPB 4357 / Et1/99).